We begin with the raw amino-acid sequence, 113 residues long: Protein Asterix (113 aa).

The helical transmembrane segment at 81–97 threads the bilayer; it reads IVSSFMLSVSAVVMSYL.

The protein belongs to the Asterix family.

It is found in the membrane. This chain is Protein Asterix, found in Caenorhabditis elegans.